The following is a 554-amino-acid chain: MTAPGAAGRCPPTTWLGSLLLLVCLLASRSITEEVSEYCSHMIGSGHLQSLQRLIDSQMETSCQITFEFVDQEQLKDPVCYLKKAFLLVQDIMEDTMRFRDNTPNAIAIVQLQELSLRLKSCFTKDYEEHDKACVRTFYETPLQLLEKVKNVFNETKNLLDKDWNIFSKNCNNSFAECSSQDVVTKPDCNCLYPKAIPSSDPASVSPHQPLAPSMAPVAGLTWEDSEGTEGSSLLPGEQPLHTVDPGSAKQRPPRSTCQSFEPPETPVVKDSTIGGSPQPRPSVGAFNPGMEDILDSAMGTNWVPEEASGEASEIPVPQGTELSPSRPGGGSMQTEPARPSNFLSASSPLPASAKGQQPADVTGTALPRVGPVRPTGQDWNHTPQKTDHPSALLRDPPEPGSPRISSLRPQGLSNPSTLSAQPQLSRSHSSGSVLPLGELEGRRSTRDRRSPAEPEGGPASEGAARPLPRFNSVPLTDTGHERQSEGSFSPQLQESVFHLLVPSVILVLLAVGGLLFYRWRRRSHQEPQRADSPLEQPEGSPLTQDDRQVELPV.

A signal peptide spans 1-32 (MTAPGAAGRCPPTTWLGSLLLLVCLLASRSIT). Residues 33 to 496 (EEVSEYCSHM…GSFSPQLQES (464 aa)) lie on the Lumenal side of the membrane. Intrachain disulfides connect cysteine 39-cysteine 122, cysteine 80-cysteine 171, and cysteine 134-cysteine 178. N-linked (GlcNAc...) asparagine glycosylation is found at asparagine 154 and asparagine 172. A disordered region spans residues 224–488 (EDSEGTEGSS…TGHERQSEGS (265 aa)). Threonine 266 is subject to Phosphothreonine; by FAM20C. Serine 309 is a glycosylation site (O-linked (Xyl...) (chondroitin sulfate) serine). Over residues 344 to 354 (LSASSPLPASA) the composition is skewed to low complexity. Residues threonine 363 and threonine 365 are each glycosylated (O-linked (GalNAc...) threonine). The span at 404–433 (RISSLRPQGLSNPSTLSAQPQLSRSHSSGS) shows a compositional bias: polar residues. Residues 406-426 (SSLRPQGLSNPSTLSAQPQLS) are O-glycosylated at one site. Positions 440 to 453 (LEGRRSTRDRRSPA) are enriched in basic and acidic residues. Residues 497–517 (VFHLLVPSVILVLLAVGGLLF) traverse the membrane as a helical segment. Over 518 to 554 (YRWRRRSHQEPQRADSPLEQPEGSPLTQDDRQVELPV) the chain is Cytoplasmic. Residues 526–554 (QEPQRADSPLEQPEGSPLTQDDRQVELPV) form a disordered region. The span at 545–554 (QDDRQVELPV) shows a compositional bias: basic and acidic residues.

Homodimer or heterodimer; disulfide-linked. Likely to exist in multiple forms: homodimer consisting of 2 identical 150-200 kDa proteoglycan subunits, heterodimer consisting of a 150-200 kDa proteoglycan subunit and a truncated 43 kDa subunit, and homodimer consisting of 2 identical 43 kDa subunits. Interacts with CSF1R. Post-translationally, N-glycosylated. In terms of processing, O-glycosylated; contains chondroitin sulfate. O-glycosylated with core 1 or possibly core 8 glycans. O-glycosylated.

The protein localises to the cell membrane. Its subcellular location is the secreted. The protein resides in the extracellular space. Cytokine that plays an essential role in the regulation of survival, proliferation and differentiation of hematopoietic precursor cells, especially mononuclear phagocytes, such as macrophages and monocytes. Promotes the release of pro-inflammatory chemokines, and thereby plays an important role in innate immunity and in inflammatory processes. Plays an important role in the regulation of osteoclast proliferation and differentiation, the regulation of bone resorption, and is required for normal bone development. Required for normal male and female fertility. Promotes reorganization of the actin cytoskeleton, regulates formation of membrane ruffles, cell adhesion and cell migration. Plays a role in lipoprotein clearance. The polypeptide is Macrophage colony-stimulating factor 1 (CSF1) (Homo sapiens (Human)).